Consider the following 168-residue polypeptide: Cell division inhibitor SulA (168 aa).

Residues 1-20 (MSTQSVSSHNIESSSFSANQ) form a disordered region. Positions 105–111 (ALLTGNY) are ftsZ binding. Residues 161 to 168 (KIHSTLYH) are lon protease binding.

It belongs to the SulA family. In terms of assembly, interacts with FtsZ. Is rapidly cleaved and degraded by the Lon protease once DNA damage is repaired.

Its function is as follows. Component of the SOS system and an inhibitor of cell division. Accumulation of SulA causes rapid cessation of cell division and the appearance of long, non-septate filaments. In the presence of GTP, binds a polymerization-competent form of FtsZ in a 1:1 ratio, thus inhibiting FtsZ polymerization and therefore preventing it from participating in the assembly of the Z ring. This mechanism prevents the premature segregation of damaged DNA to daughter cells during cell division. This is Cell division inhibitor SulA from Pectobacterium atrosepticum (strain SCRI 1043 / ATCC BAA-672) (Erwinia carotovora subsp. atroseptica).